Consider the following 159-residue polypeptide: Phosphopantetheine adenylyltransferase (159 aa).

S8 lines the substrate pocket. ATP-binding positions include 8 to 9 (SF) and H16. Residues K40, T72, and R86 each coordinate substrate. ATP contacts are provided by residues 87-89 (GLR), E97, and 122-128 (HSFVSSS).

This sequence belongs to the bacterial CoaD family. Homohexamer. The cofactor is Mg(2+).

It is found in the cytoplasm. It catalyses the reaction (R)-4'-phosphopantetheine + ATP + H(+) = 3'-dephospho-CoA + diphosphate. The protein operates within cofactor biosynthesis; coenzyme A biosynthesis; CoA from (R)-pantothenate: step 4/5. Reversibly transfers an adenylyl group from ATP to 4'-phosphopantetheine, yielding dephospho-CoA (dPCoA) and pyrophosphate. The chain is Phosphopantetheine adenylyltransferase from Synechococcus sp. (strain JA-3-3Ab) (Cyanobacteria bacterium Yellowstone A-Prime).